Reading from the N-terminus, the 161-residue chain is Regulator of ribonuclease activity A (161 aa).

It belongs to the RraA family. In terms of assembly, homotrimer. Binds to both RNA-binding sites in the C-terminal region of Rne and to RhlB.

The protein localises to the cytoplasm. Functionally, globally modulates RNA abundance by binding to RNase E (Rne) and regulating its endonucleolytic activity. Can modulate Rne action in a substrate-dependent manner by altering the composition of the degradosome. Modulates RNA-binding and helicase activities of the degradosome. In Yersinia enterocolitica serotype O:8 / biotype 1B (strain NCTC 13174 / 8081), this protein is Regulator of ribonuclease activity A.